Reading from the N-terminus, the 510-residue chain is 2,3-bisphosphoglycerate-independent phosphoglycerate mutase (510 aa).

Mn(2+)-binding residues include Asp-12 and Ser-62. The Phosphoserine intermediate role is filled by Ser-62. Substrate contacts are provided by residues His-123, 153–154 (RD), Arg-185, Arg-191, 260–263 (RPDR), and Lys-335. Residues Asp-402, His-406, Asp-443, His-444, and His-461 each coordinate Mn(2+).

It belongs to the BPG-independent phosphoglycerate mutase family. In terms of assembly, monomer. The cofactor is Mn(2+).

It carries out the reaction (2R)-2-phosphoglycerate = (2R)-3-phosphoglycerate. It participates in carbohydrate degradation; glycolysis; pyruvate from D-glyceraldehyde 3-phosphate: step 3/5. In terms of biological role, catalyzes the interconversion of 2-phosphoglycerate and 3-phosphoglycerate. The polypeptide is 2,3-bisphosphoglycerate-independent phosphoglycerate mutase (Listeria monocytogenes serovar 1/2a (strain ATCC BAA-679 / EGD-e)).